Reading from the N-terminus, the 841-residue chain is MGKTQKKNSKGRLDRYYYLAKEKGYRARSSFKIIQINEKYGHFLEKSKVVIDLCAAPGSWCQVASKLCPVNSLIIGVDIVPMKPMPNVITFQSDITTEDCRSKLRGYMKTWKADTVLHDGAPNVGLGWVQDAFTQSQLTLQALKLAVENLVVNGTFVTKIFRSKDYNKLIWVFQQLFEKVEATKPPASRNVSAEIFVVCKGFKAPKRLDPRLLDPKEVFEELPDGQQNMESKIYNPEKKVRKRQGYEEGDNLLYHETSILDFVRTEDPISMLGEMNKFTIDENDHEWKILKKLKQTTDEFRSCIEDLKVLGKKDFKMILRWRKIAREILGIEVKDDAKTEIEVVPLTEEEQIEKDLQGLQEKQRLNVKRERRRKNEMKQKELQRMQMNMITPTDIGIEAASLGKESLFNLKTAEKTGILNDLAKGKKRMIFTDDELAKDNDIYIDENIMIKDKDSAADADDLESELNAMYSDYKTRRSERDAKFRAKQARGGDNEEEWTGFNEGSLEKKEEEGKDYIEDNDDEGVEGDSDDDEAITNLISKLKGQEGDHKLSSKARMIFNDPIFNNVEPDLPVNTVNDGIMSSESVGDISKLNKKRKHEEMHQKQDEADSSDESSSDDSDFEIVANDNASEEFDSDYDSEEEKNQTKKEKHSRDIDIATVEAMTLAHQLALGQKNKHDLVDEGFNRYTFRDTENLPDWFLEDEKEHSKINKPITKEAAMAIKEKIKAMNARPIKKVAEAKARKRMRAVARLEKIKKKAGLINDDSDKTEKDKAEEISRLMRKVTKKPKTKPKVTLVVASGRNKGLAGRPKGVKGKYKMVDGVMKNEQRALRRIAKKHHKKK.

S-adenosyl-L-methionine-binding residues include Gly58, Trp60, Asp78, Asp94, and Asp119. Lys159 (proton acceptor) is an active-site residue. Residues 360–389 (QEKQRLNVKRERRRKNEMKQKELQRMQMNM) adopt a coiled-coil conformation. 2 positions are modified to phosphoserine: Ser455 and Ser464. Disordered regions lie at residues 480–534 (RDAK…DDEA) and 565–654 (NNVE…HSRD). A compositionally biased stretch (basic and acidic residues) spans 505 to 517 (SLEKKEEEGKDYI). Residues 518 to 534 (EDNDDEGVEGDSDDDEA) show a composition bias toward acidic residues. Ser529 bears the Phosphoserine mark. A compositionally biased stretch (polar residues) spans 574–585 (NTVNDGIMSSES). Over residues 598–607 (HEEMHQKQDE) the composition is skewed to basic and acidic residues. 2 stretches are compositionally biased toward acidic residues: residues 608 to 621 (ADSS…DSDF) and 629 to 641 (ASEE…DSEE). Residues 642–654 (EKNQTKKEKHSRD) show a composition bias toward basic and acidic residues.

The protein belongs to the class I-like SAM-binding methyltransferase superfamily. RNA methyltransferase RlmE family. SPB1 subfamily. Component of the nucleolar and nucleoplasmic pre-60S ribosomal particle. Interacts with the snoRNA-associated proteins NOP1 and NOP58.

The protein localises to the nucleus. The protein resides in the nucleolus. The enzyme catalyses guanosine(2922) in 27S pre-rRNA + S-adenosyl-L-methionine = 2'-O-methylguanosine(2922) in 27S pre-rRNA + S-adenosyl-L-homocysteine + H(+). Functionally, required for proper assembly of pre-ribosomal particles during the biogenesis of the 60S ribosomal subunit. Specifically methylates the guanosine in position 2922 of the 25S rRNA at the stage of 27S pre-rRNA maturation. Also methylates the uridine in position 2921 in the absence of methylation of this residue guided by snoRNA snR52 at the stage of 35S pre-rRNA maturation. The chain is 27S pre-rRNA (guanosine(2922)-2'-O)-methyltransferase from Saccharomyces cerevisiae (strain ATCC 204508 / S288c) (Baker's yeast).